Here is a 228-residue protein sequence, read N- to C-terminus: Lipoprotein-releasing system ATP-binding protein LolD (228 aa).

One can recognise an ABC transporter domain in the interval 7–227; sequence LQLSGIERHY…TIEDGKVVEL (221 aa). 43–50 is an ATP binding site; sequence APSGTGKS.

It belongs to the ABC transporter superfamily. Lipoprotein translocase (TC 3.A.1.125) family. The complex is composed of two ATP-binding proteins (LolD) and two transmembrane proteins (LolC and LolE).

Its subcellular location is the cell inner membrane. In terms of biological role, part of the ABC transporter complex LolCDE involved in the translocation of mature outer membrane-directed lipoproteins, from the inner membrane to the periplasmic chaperone, LolA. Responsible for the formation of the LolA-lipoprotein complex in an ATP-dependent manner. This is Lipoprotein-releasing system ATP-binding protein LolD from Rhizobium meliloti (strain 1021) (Ensifer meliloti).